Here is a 372-residue protein sequence, read N- to C-terminus: Ciliary neurotrophic factor receptor subunit alpha (372 aa).

The first 22 residues, 1–22 (MAAPVPWACCAVLAAAAAVVYA), serve as a signal peptide directing secretion. The Ig-like C2-type domain occupies 27 to 104 (PQEAPHVQYE…WHLRHQVLLH (78 aa)). Cys46 and Cys89 are disulfide-bonded. 4 N-linked (GlcNAc...) asparagine glycosylation sites follow: Asn60, Asn70, Asn142, and Asn190. Fibronectin type-III domains lie at 108 to 205 (PPRE…VKPD) and 206 to 306 (PPEN…TEEP). Positions 290–294 (WSDWS) match the WSXWS motif motif. A disordered region spans residues 301–340 (PWTEEPRHLTTEAQAAETTTSTTSSLAPPPTTKICDPGEL). Positions 311–326 (TEAQAAETTTSTTSSL) are enriched in low complexity. Ser342 is lipidated: GPI-anchor amidated serine. Positions 343-372 (GGGPSAPFLVSVPITLALAAAAATASSLLI) are cleaved as a propeptide — removed in mature form.

Belongs to the type I cytokine receptor family. Type 3 subfamily. As to quaternary structure, forms a heterotrimer with LIFR and IL6ST. Interacts with heterodimeric neurotropic cytokine composed of CLCF1/CLC and CRLF1/CLF-1. Either alone or in complex with the heterodimer CLCF1-CRLF1 interacts with SORL1; this interaction may promote internalization and lysosomal degradation. Component of a receptor complex composed of IL6ST/GP130, IL27RA/WSX1 and CNTFR which interacts with the neuroprotective peptide humanin. In terms of tissue distribution, nervous system and skeletal muscle.

Its subcellular location is the cell membrane. Its function is as follows. Binds to CNTF. The alpha subunit provides the receptor specificity. Receptor for heterodimeric neurotropic cytokine composed of CLCF1/CLC and CRLF1/CLF-1. Acts as a receptor for the neuroprotective peptide humanin as part of a complex with IL6ST/GP130 and IL27RA/WSX1. This chain is Ciliary neurotrophic factor receptor subunit alpha (CNTFR), found in Homo sapiens (Human).